We begin with the raw amino-acid sequence, 264 residues long: Thymidylate synthase (264 aa).

Arg21 lines the dUMP pocket. His51 is a (6R)-5,10-methylene-5,6,7,8-tetrahydrofolate binding site. 126–127 serves as a coordination point for dUMP; the sequence is RR. The active-site Nucleophile is the Cys146. DUMP is bound by residues 166–169, Asn177, and 207–209; these read RSCD and HLY. Asp169 contributes to the (6R)-5,10-methylene-5,6,7,8-tetrahydrofolate binding site. Ala263 lines the (6R)-5,10-methylene-5,6,7,8-tetrahydrofolate pocket.

It belongs to the thymidylate synthase family. Bacterial-type ThyA subfamily. As to quaternary structure, homodimer.

It is found in the cytoplasm. It catalyses the reaction dUMP + (6R)-5,10-methylene-5,6,7,8-tetrahydrofolate = 7,8-dihydrofolate + dTMP. It functions in the pathway pyrimidine metabolism; dTTP biosynthesis. Its function is as follows. Catalyzes the reductive methylation of 2'-deoxyuridine-5'-monophosphate (dUMP) to 2'-deoxythymidine-5'-monophosphate (dTMP) while utilizing 5,10-methylenetetrahydrofolate (mTHF) as the methyl donor and reductant in the reaction, yielding dihydrofolate (DHF) as a by-product. This enzymatic reaction provides an intracellular de novo source of dTMP, an essential precursor for DNA biosynthesis. The chain is Thymidylate synthase from Salmonella arizonae (strain ATCC BAA-731 / CDC346-86 / RSK2980).